The chain runs to 417 residues: UDP-N-acetylglucosamine 1-carboxyvinyltransferase (417 aa).

22–23 lines the phosphoenolpyruvate pocket; it reads KN. Arg92 contributes to the UDP-N-acetyl-alpha-D-glucosamine binding site. The active-site Proton donor is Cys116. At Cys116 the chain carries 2-(S-cysteinyl)pyruvic acid O-phosphothioketal. Positions 304 and 326 each coordinate UDP-N-acetyl-alpha-D-glucosamine.

Belongs to the EPSP synthase family. MurA subfamily.

The protein resides in the cytoplasm. It catalyses the reaction phosphoenolpyruvate + UDP-N-acetyl-alpha-D-glucosamine = UDP-N-acetyl-3-O-(1-carboxyvinyl)-alpha-D-glucosamine + phosphate. It functions in the pathway cell wall biogenesis; peptidoglycan biosynthesis. Cell wall formation. Adds enolpyruvyl to UDP-N-acetylglucosamine. This chain is UDP-N-acetylglucosamine 1-carboxyvinyltransferase, found in Geotalea daltonii (strain DSM 22248 / JCM 15807 / FRC-32) (Geobacter daltonii).